Consider the following 270-residue polypeptide: SAGA-associated factor 29 homolog A (270 aa).

Position 2 is an N-acetylserine (Ser-2). A disordered region spans residues 85 to 113; that stretch reads LPSGPTGQQRRKLEGNEQKRKRMKVDTDV. Over residues 95–113 the composition is skewed to basic and acidic residues; the sequence is RKLEGNEQKRKRMKVDTDV. The SGF29 C-terminal domain occupies 125–270; that stretch reads EAYASLKGEQ…VVALPEGHRQ (146 aa). Histone H3K4me3 N-terminus binding stretches follow at residues 168-170 and 217-220; these read DEE and GTTA. Positions 242-245 are histone H3K4me3 binding; that stretch reads FDDD.

This sequence belongs to the SGF29 family. As to expression, expressed in roots, rosette leaves, cauline leaves, stems and flowers.

The protein resides in the nucleus. In terms of biological role, chromatin reader component of the transcription regulatory histone acetylation (HAT) complex SAGA. Involved in salt stress tolerance. Enhances the effect of ADA2B in the positive regulation of salt-induced gene expression. This Arabidopsis thaliana (Mouse-ear cress) protein is SAGA-associated factor 29 homolog A.